A 393-amino-acid polypeptide reads, in one-letter code: Pyridinium-3,5-bisthiocarboxylic acid mononucleotide nickel insertion protein (393 aa).

The protein belongs to the LarC family.

It carries out the reaction Ni(II)-pyridinium-3,5-bisthiocarboxylate mononucleotide = pyridinium-3,5-bisthiocarboxylate mononucleotide + Ni(2+). Involved in the biosynthesis of a nickel-pincer cofactor ((SCS)Ni(II) pincer complex). Binds Ni(2+), and functions in nickel delivery to pyridinium-3,5-bisthiocarboxylic acid mononucleotide (P2TMN), to form the mature cofactor. Is thus probably required for the activation of nickel-pincer cofactor-dependent enzymes. The polypeptide is Pyridinium-3,5-bisthiocarboxylic acid mononucleotide nickel insertion protein (Nocardioides sp. (strain ATCC BAA-499 / JS614)).